We begin with the raw amino-acid sequence, 156 residues long: NAD(P)H-quinone oxidoreductase subunit N (156 aa).

Belongs to the complex I NdhN subunit family. NDH-1 can be composed of about 15 different subunits; different subcomplexes with different compositions have been identified which probably have different functions.

It localises to the cellular thylakoid membrane. It catalyses the reaction a plastoquinone + NADH + (n+1) H(+)(in) = a plastoquinol + NAD(+) + n H(+)(out). It carries out the reaction a plastoquinone + NADPH + (n+1) H(+)(in) = a plastoquinol + NADP(+) + n H(+)(out). Functionally, NDH-1 shuttles electrons from an unknown electron donor, via FMN and iron-sulfur (Fe-S) centers, to quinones in the respiratory and/or the photosynthetic chain. The immediate electron acceptor for the enzyme in this species is believed to be plastoquinone. Couples the redox reaction to proton translocation, and thus conserves the redox energy in a proton gradient. Cyanobacterial NDH-1 also plays a role in inorganic carbon-concentration. This chain is NAD(P)H-quinone oxidoreductase subunit N, found in Prochlorococcus marinus subsp. pastoris (strain CCMP1986 / NIES-2087 / MED4).